A 251-amino-acid polypeptide reads, in one-letter code: Hydroxyacylglutathione hydrolase (251 aa).

Residues His53, His55, Asp57, His58, His110, Asp127, and His165 each contribute to the Zn(2+) site.

It belongs to the metallo-beta-lactamase superfamily. Glyoxalase II family. Monomer. Zn(2+) serves as cofactor.

It carries out the reaction an S-(2-hydroxyacyl)glutathione + H2O = a 2-hydroxy carboxylate + glutathione + H(+). It participates in secondary metabolite metabolism; methylglyoxal degradation; (R)-lactate from methylglyoxal: step 2/2. Its function is as follows. Thiolesterase that catalyzes the hydrolysis of S-D-lactoyl-glutathione to form glutathione and D-lactic acid. This is Hydroxyacylglutathione hydrolase from Salmonella arizonae (strain ATCC BAA-731 / CDC346-86 / RSK2980).